Consider the following 1039-residue polypeptide: uncharacterized protein (1039 aa).

Residues 1-28 (MKLFPRTLLKILVVSFILNFGVTSKSYA) form the signal peptide. 6 helical membrane-spanning segments follow: residues 326–346 (IVTA…LLAG), 354–374 (YINF…LNIT), 387–407 (MIQW…SWVM), 491–511 (MLVS…AFMV), 517–537 (CMVS…MFLF), and 551–571 (MISF…MFSV). The segment at 654-680 (KPNQTCDPKAADADTKCNPKPGDSSTS) is disordered. The helical transmembrane segment at 710–730 (IKDILLALVTACFTLYLMYNF) threads the bilayer. Disordered regions lie at residues 799–875 (LVKG…PTTV), 917–949 (IKEA…LDEN), and 1004–1039 (LYRS…DENP). A compositionally biased stretch (gly residues) spans 802–811 (GSGGGGGSEG). Residues 812-836 (GDSFTSGGLRETSSTAATPSSALSS) are compositionally biased toward low complexity. Positions 843–861 (GTATPSSASEEMLDTSFSN) are enriched in polar residues. 2 stretches are compositionally biased toward basic and acidic residues: residues 917–939 (IKEA…HTTE) and 1004–1033 (LYRS…KIDS).

Belongs to the TrbL/VirB6 family.

The protein localises to the cell membrane. This is an uncharacterized protein from Rickettsia bellii (strain RML369-C).